A 351-amino-acid polypeptide reads, in one-letter code: Hepatocyte nuclear factor 3-gamma (351 aa).

Over residues 52-73 (PGGLPASPLPTGPLAPPAPTAP) the composition is skewed to pro residues. The interval 52 to 94 (PGGLPASPLPTGPLAPPAPTAPLGPTFPGLGASTGGGSSSGYG) is disordered. Residues 83–94 (ASTGGGSSSGYG) show a composition bias toward gly residues. The segment at residues 118 to 212 (KPPYSYISLI…ENGCYLRRQK (95 aa)) is a DNA-binding region (fork-head). Positions 218–275 (EKVKKGGGGSSASRNSAGSASTATAPAATVASTPQPQPPPPEPEAQGGDEVGALDCGS) are disordered. Low complexity predominate over residues 228–251 (SASRNSAGSASTATAPAATVASTP).

It localises to the nucleus. In terms of biological role, transcription activator for a number of liver genes such as AFP, albumin, tyrosine aminotransferase, PEPCK, etc. Interacts with the cis-acting regulatory regions of these genes. The protein is Hepatocyte nuclear factor 3-gamma (FOXA3) of Bos taurus (Bovine).